Here is a 114-residue protein sequence, read N- to C-terminus: Large ribosomal subunit protein bL20 (114 aa).

Belongs to the bacterial ribosomal protein bL20 family.

In terms of biological role, binds directly to 23S ribosomal RNA and is necessary for the in vitro assembly process of the 50S ribosomal subunit. It is not involved in the protein synthesizing functions of that subunit. This is Large ribosomal subunit protein bL20 from Anaeromyxobacter sp. (strain Fw109-5).